The sequence spans 276 residues: MQKIKIIIASDSVGETAEQVAKACVSQFNSKNFKSEIVRYPYIETIENVDEVIEIAKENELNIVVFTLVKPDIKQYMEERLAENKIKHVDIMGPLMSILTDKIDEQPYCEPGIVHKLDEAYFKKIEAIEFAVKYDDGKDPKGLPKADIVLIGISRTSKTPLSQFLAHKRYKVMNIPIVPEINPPEALFEIDPKKCIALKISEEKLNKIRKERLKQLGLGDSARYATGQRIQEELEYFDNIVNKIGCPVIDVSDKAIEETANDIMYIIEQNKTNKSE.

152–159 contributes to the ADP binding site; the sequence is GISRTSKT.

Belongs to the pyruvate, phosphate/water dikinase regulatory protein family. PDRP subfamily.

It catalyses the reaction N(tele)-phospho-L-histidyl/L-threonyl-[pyruvate, phosphate dikinase] + ADP = N(tele)-phospho-L-histidyl/O-phospho-L-threonyl-[pyruvate, phosphate dikinase] + AMP + H(+). The catalysed reaction is N(tele)-phospho-L-histidyl/O-phospho-L-threonyl-[pyruvate, phosphate dikinase] + phosphate + H(+) = N(tele)-phospho-L-histidyl/L-threonyl-[pyruvate, phosphate dikinase] + diphosphate. In terms of biological role, bifunctional serine/threonine kinase and phosphorylase involved in the regulation of the pyruvate, phosphate dikinase (PPDK) by catalyzing its phosphorylation/dephosphorylation. This chain is Putative pyruvate, phosphate dikinase regulatory protein, found in Staphylococcus carnosus (strain TM300).